The chain runs to 489 residues: Glutamyl-tRNA(Gln) amidotransferase subunit A (489 aa).

Active-site charge relay system residues include K80 and S160. The Acyl-ester intermediate role is filled by S184.

The protein belongs to the amidase family. GatA subfamily. Heterotrimer of A, B and C subunits.

It catalyses the reaction L-glutamyl-tRNA(Gln) + L-glutamine + ATP + H2O = L-glutaminyl-tRNA(Gln) + L-glutamate + ADP + phosphate + H(+). Functionally, allows the formation of correctly charged Gln-tRNA(Gln) through the transamidation of misacylated Glu-tRNA(Gln) in organisms which lack glutaminyl-tRNA synthetase. The reaction takes place in the presence of glutamine and ATP through an activated gamma-phospho-Glu-tRNA(Gln). The protein is Glutamyl-tRNA(Gln) amidotransferase subunit A of Wolbachia sp. subsp. Drosophila simulans (strain wRi).